The chain runs to 261 residues: Taurine import ATP-binding protein TauB (261 aa).

Residues 4–233 (LQLEGIGAHY…RYSAGESARA (230 aa)) enclose the ABC transporter domain. 38–45 (GPSGSGKT) contacts ATP.

It belongs to the ABC transporter superfamily. Taurine importer (TC 3.A.1.17.1) family. In terms of assembly, the complex is composed of two ATP-binding proteins (TauB), two transmembrane proteins (TauC) and a solute-binding protein (TauA).

Its subcellular location is the cell inner membrane. The enzyme catalyses taurine(out) + ATP + H2O = taurine(in) + ADP + phosphate + H(+). Functionally, part of the ABC transporter complex TauABC involved in taurine import. Responsible for energy coupling to the transport system. The polypeptide is Taurine import ATP-binding protein TauB (Pseudomonas syringae pv. tomato (strain ATCC BAA-871 / DC3000)).